The following is a 316-amino-acid chain: ATP synthase gamma chain (316 aa).

This sequence belongs to the ATPase gamma chain family. F-type ATPases have 2 components, CF(1) - the catalytic core - and CF(0) - the membrane proton channel. CF(1) has five subunits: alpha(3), beta(3), gamma(1), delta(1), epsilon(1). CF(0) has three main subunits: a, b and c.

The protein resides in the cellular thylakoid membrane. Produces ATP from ADP in the presence of a proton gradient across the membrane. The gamma chain is believed to be important in regulating ATPase activity and the flow of protons through the CF(0) complex. This Prochlorococcus marinus (strain MIT 9515) protein is ATP synthase gamma chain.